Consider the following 180-residue polypeptide: Decaprenylphosphoryl-5-phosphoribose phosphatase (180 aa).

4 helical membrane passes run 31 to 51 (ALSHFGEHSAGWVALAAAGAL), 61 to 81 (LAVGAGAFLAHAAAVVIKRVV), 116 to 136 (VLLAQTTGVPAPALLVPPMAL), and 139 to 159 (LVLGVHYPTDVVTGVVVGALV).

It belongs to the PA-phosphatase related phosphoesterase family.

It is found in the cell membrane. The catalysed reaction is trans,octa-cis-decaprenylphospho-beta-D-ribofuranose 5-phosphate + H2O = trans,octa-cis-decaprenylphospho-beta-D-ribofuranose + phosphate. It functions in the pathway cell wall biogenesis; cell wall polysaccharide biosynthesis. In terms of biological role, phosphatase involved in the biosynthesis of decaprenylphosphoryl arabinose (DPA), which serves as the arabinose donor for the biosynthesis of arabinogalactan, the major mycobacterial cell wall polysaccharide. Catalyzes the dephosphorylation of decaprenylphosphoryl-5-phosphoribose (DPPR) to decaprenyl-phosphoribose (DPR). The chain is Decaprenylphosphoryl-5-phosphoribose phosphatase from Mycolicibacterium smegmatis (strain ATCC 700084 / mc(2)155) (Mycobacterium smegmatis).